Reading from the N-terminus, the 442-residue chain is UDP-N-acetylmuramate--L-alanine ligase (442 aa).

Residue 109-115 (GAHGKTS) participates in ATP binding.

It belongs to the MurCDEF family.

The protein localises to the cytoplasm. It catalyses the reaction UDP-N-acetyl-alpha-D-muramate + L-alanine + ATP = UDP-N-acetyl-alpha-D-muramoyl-L-alanine + ADP + phosphate + H(+). The protein operates within cell wall biogenesis; peptidoglycan biosynthesis. In terms of biological role, cell wall formation. The protein is UDP-N-acetylmuramate--L-alanine ligase of Streptococcus pyogenes serotype M28 (strain MGAS6180).